The sequence spans 158 residues: Transcriptional repressor NrdR (158 aa).

A zinc finger lies at 3-34 (CPYCQSEDTQVKDSRPAEDGAVIRRRRVCSVC). Residues 49-139 (LMVVKKSGRR…VYRNFSKAVD (91 aa)) form the ATP-cone domain.

It belongs to the NrdR family. It depends on Zn(2+) as a cofactor.

Negatively regulates transcription of bacterial ribonucleotide reductase nrd genes and operons by binding to NrdR-boxes. This chain is Transcriptional repressor NrdR, found in Brucella abortus (strain S19).